The chain runs to 253 residues: MGTILDEIVEQKQREVAELYEIYTPVKTKRKTHSLVEALQQFTVIAEVKRASPSKGDINLHVDVRKQVGTYEKCGAGAVSVLTDGQFFKGSFHDLQTAREESNIPLLCKDFIIDKIQIDRAYEAGADIILLIVAALTKEKLKELYSYVLEKGLEVIVEVHDEQELETAIVLNPHVIGINNRNLKTFEVDLSQTEKLGKRLNEEKLLWISESGIHSKEDIIRVKRAGAKGVLVGEALMTSSSISSFFEDCKVNI.

The protein belongs to the TrpC family.

It catalyses the reaction 1-(2-carboxyphenylamino)-1-deoxy-D-ribulose 5-phosphate + H(+) = (1S,2R)-1-C-(indol-3-yl)glycerol 3-phosphate + CO2 + H2O. Its pathway is amino-acid biosynthesis; L-tryptophan biosynthesis; L-tryptophan from chorismate: step 4/5. This Bacillus cereus (strain B4264) protein is Indole-3-glycerol phosphate synthase.